The sequence spans 92 residues: Small ribosomal subunit protein bS18B (92 aa).

This sequence belongs to the bacterial ribosomal protein bS18 family. Part of the 30S ribosomal subunit. Forms a tight heterodimer with protein bS6.

Functionally, binds as a heterodimer with protein bS6 to the central domain of the 16S rRNA, where it helps stabilize the platform of the 30S subunit. This is Small ribosomal subunit protein bS18B from Cupriavidus pinatubonensis (strain JMP 134 / LMG 1197) (Cupriavidus necator (strain JMP 134)).